Reading from the N-terminus, the 454-residue chain is tRNA-2-methylthio-N(6)-dimethylallyladenosine synthase (454 aa).

In terms of domain architecture, MTTase N-terminal spans 6–122; sequence RRYHITTYGC…LQDLLEQVAS (117 aa). [4Fe-4S] cluster contacts are provided by cysteine 15, cysteine 51, cysteine 85, cysteine 157, cysteine 161, and cysteine 164. The Radical SAM core domain maps to 143-384; sequence RDSAVTAWVN…GVCAELRSQR (242 aa). Positions 383–447 constitute a TRAM domain; the sequence is QRYANRIEEV…SFSLTGEPLS (65 aa).

It belongs to the methylthiotransferase family. MiaB subfamily. Monomer. Requires [4Fe-4S] cluster as cofactor.

It is found in the cytoplasm. The catalysed reaction is N(6)-dimethylallyladenosine(37) in tRNA + (sulfur carrier)-SH + AH2 + 2 S-adenosyl-L-methionine = 2-methylsulfanyl-N(6)-dimethylallyladenosine(37) in tRNA + (sulfur carrier)-H + 5'-deoxyadenosine + L-methionine + A + S-adenosyl-L-homocysteine + 2 H(+). In terms of biological role, catalyzes the methylthiolation of N6-(dimethylallyl)adenosine (i(6)A), leading to the formation of 2-methylthio-N6-(dimethylallyl)adenosine (ms(2)i(6)A) at position 37 in tRNAs that read codons beginning with uridine. The sequence is that of tRNA-2-methylthio-N(6)-dimethylallyladenosine synthase from Acaryochloris marina (strain MBIC 11017).